We begin with the raw amino-acid sequence, 311 residues long: Burkholderia TALE-like protein 3 (311 aa).

A Cryptic repeat -1 repeat occupies 19-50; that stretch reads LSPFECLKIEKHSGGADALEFISNKYDALTQV. A Cryptic repeat 0 repeat occupies 51 to 83; it reads LSRADILKIACHDCAAHALQAVLDYEQVFRQRG. 6 Core repeat repeats span residues 84-116, 117-149, 150-182, 183-215, 216-248, and 249-281; these read FARA…NECG, FSQA…NERD, YSGA…CESG, YSGA…CERG, YCRT…CERG, and YSRT…TQAG. A Cryptic repeat +1 repeat occupies 282 to 311; the sequence is RSNEDIVNMAARTGAAGQIRKMAAQLSGRQ.

Belongs to the transcription activator-like effector (TALE) family. Bat subfamily.

Does not bind DNA, probably because it has too few core repeats. This is Burkholderia TALE-like protein 3 from Mycetohabitans rhizoxinica (strain DSM 19002 / CIP 109453 / HKI 454) (Paraburkholderia rhizoxinica).